A 523-amino-acid chain; its full sequence is Probable lipid II flippase MurJ (523 aa).

12 consecutive transmembrane segments (helical) span residues 98-118, 146-166, 170-190, 201-221, 246-266, 284-304, 328-348, 360-380, 395-415, 422-442, 461-481, and 489-509; these read AFYSLLLVFLGVLTLLGIVYV, IMFGFVFFVCTYAFYMGILNA, FGLPALAPALLNVSMLVFTFM, GLAWGVLIGGLLQALLLAVAL, MLPGLIGMGLLQFSTLVNLYF, LLELPLSLISVSIGAALLPTL, LFLAWPAALGLYILAEPIIEV, VQMTAAILRIYAVSLLLVSCS, VPMVLALVSLAVHVSLAPVLM, GLMISGVVAALINAVLLMGLL, FVLAGAGMVISLQAYELLMAQ, and LALFVTILLAVVAYFGLAYVL.

Belongs to the MurJ/MviN family.

Its subcellular location is the cell inner membrane. It participates in cell wall biogenesis; peptidoglycan biosynthesis. Its function is as follows. Involved in peptidoglycan biosynthesis. Transports lipid-linked peptidoglycan precursors from the inner to the outer leaflet of the cytoplasmic membrane. This is Probable lipid II flippase MurJ from Bdellovibrio bacteriovorus (strain ATCC 15356 / DSM 50701 / NCIMB 9529 / HD100).